Reading from the N-terminus, the 411-residue chain is NADH-quinone oxidoreductase subunit D 2 (411 aa).

It belongs to the complex I 49 kDa subunit family. In terms of assembly, NDH-1 is composed of 14 different subunits. Subunits NuoB, C, D, E, F, and G constitute the peripheral sector of the complex.

The protein localises to the cell membrane. The catalysed reaction is a quinone + NADH + 5 H(+)(in) = a quinol + NAD(+) + 4 H(+)(out). Functionally, NDH-1 shuttles electrons from NADH, via FMN and iron-sulfur (Fe-S) centers, to quinones in the respiratory chain. The immediate electron acceptor for the enzyme in this species is believed to be ubiquinone. Couples the redox reaction to proton translocation (for every two electrons transferred, four hydrogen ions are translocated across the cytoplasmic membrane), and thus conserves the redox energy in a proton gradient. The chain is NADH-quinone oxidoreductase subunit D 2 from Chloroflexus aurantiacus (strain ATCC 29366 / DSM 635 / J-10-fl).